Reading from the N-terminus, the 935-residue chain is LPS-assembly protein LptD (935 aa).

The first 33 residues, 1 to 33, serve as a signal peptide directing secretion; sequence MALKSPAFRRKFPLLVTGGLLALQPLATSYVVA. The segment at 52–85 is disordered; it reads KTPVNNLPPRPVHEGAAVSSGTEAAGEAETADRP. Residues 65 to 79 show a composition bias toward low complexity; sequence EGAAVSSGTEAAGEA.

Belongs to the LptD family. In terms of assembly, component of the lipopolysaccharide transport and assembly complex. Interacts with LptE and LptA.

Its subcellular location is the cell outer membrane. Together with LptE, is involved in the assembly of lipopolysaccharide (LPS) at the surface of the outer membrane. The chain is LPS-assembly protein LptD from Pseudomonas putida (strain ATCC 700007 / DSM 6899 / JCM 31910 / BCRC 17059 / LMG 24140 / F1).